The primary structure comprises 270 residues: Phosphatidylinositol transfer protein alpha isoform (270 aa).

Residues Thr-58, Lys-60, Glu-85, Asn-89, Thr-96, and Lys-194 each coordinate a 1,2-diacyl-sn-glycero-3-phospho-(1D-myo-inositol). Position 215 is an N6-acetyllysine (Lys-215). Positions 250–263 (TKRQLDEMRQKDPV) are enriched in basic and acidic residues. The disordered stretch occupies residues 250 to 270 (TKRQLDEMRQKDPVKGMTADD).

This sequence belongs to the PtdIns transfer protein family. PI transfer class I subfamily.

It localises to the cytoplasm. It is found in the nucleus. The enzyme catalyses a 1,2-diacyl-sn-glycero-3-phosphocholine(in) = a 1,2-diacyl-sn-glycero-3-phosphocholine(out). The catalysed reaction is a 1,2-diacyl-sn-glycero-3-phospho-(1D-myo-inositol)(in) = a 1,2-diacyl-sn-glycero-3-phospho-(1D-myo-inositol)(out). Phosphatidylinositol transfer activity is inhibited by N-ethylmaleimide. Functionally, catalyzes the transfer of phosphatidylinositol (PI) and phosphatidylcholine (PC) between membranes. Shows a preference for PI and PC containing shorter saturated or monosaturated acyl chains at the sn-1 and sn-2 positions. Preference order for PC is C16:1 &gt; C16:0 &gt; C18:1 &gt; C18:0 &gt; C20:4 and for PI is C16:1 &gt; C16:0 &gt; C18:1 &gt; C18:0 &gt; C20:4 &gt; C20:3. In Homo sapiens (Human), this protein is Phosphatidylinositol transfer protein alpha isoform (PITPNA).